Consider the following 90-residue polypeptide: MARMVNCVLLGKEAEGLDFPPYPGELGKKIYEGVSKEAWQKWVKHQTMLINEYRLTPVDPKARKFLEEEMDKFFFSGGSTKPEGYVAPSK.

Belongs to the Fe(2+)-trafficking protein family.

Functionally, could be a mediator in iron transactions between iron acquisition and iron-requiring processes, such as synthesis and/or repair of Fe-S clusters in biosynthetic enzymes. The sequence is that of Probable Fe(2+)-trafficking protein from Thioalkalivibrio sulfidiphilus (strain HL-EbGR7).